A 498-amino-acid chain; its full sequence is DNA primase (498 aa).

The CHC2-type zinc-finger motif lies at 35 to 59; the sequence is CPFHPDDTPSFYVSPSKQIFKCFGC. Positions 243–324 constitute a Toprim domain; that stretch reads GFAILVEGYF…EVYPVYLPEG (82 aa). Residues E249, D293, and D295 each coordinate Mg(2+).

It belongs to the DnaG primase family. As to quaternary structure, monomer. Interacts with DnaB. The cofactor is Zn(2+). It depends on Mg(2+) as a cofactor.

It catalyses the reaction ssDNA + n NTP = ssDNA/pppN(pN)n-1 hybrid + (n-1) diphosphate.. In terms of biological role, RNA polymerase that catalyzes the synthesis of short RNA molecules used as primers for DNA polymerase during DNA replication. The polypeptide is DNA primase (Aquifex aeolicus (strain VF5)).